The following is an 803-amino-acid chain: Myb-like protein V (803 aa).

2 disordered regions span residues 237–333 (SNIY…LPGL) and 429–803 (KSTS…SRRK). A coiled-coil region spans residues 258–323 (DANDKNENNN…ENNKNKRTKS (66 aa)). The segment covering 271–294 (DDADDAAADDADDADDDDMDDESD) has biased composition (acidic residues). Positions 295-315 (SNNNNKNSNNKNSNNKNSNEN) are enriched in low complexity. The region spanning 332-379 (GLWTDEECRSLIKAVMIIGHRWIKIKEDYYSTSKRKPSQLKDKMRSLR) is the Myb-like domain. 2 coiled-coil regions span residues 400-429 (EIEK…SNIK) and 463-496 (NNED…NSAV). A compositionally biased stretch (polar residues) spans 429 to 438 (KSTSNTSAAS). Composition is skewed to acidic residues over residues 448-480 (NDSD…DEND) and 510-533 (EEEE…EENE). Basic residues-rich tracts occupy residues 537–553 (KQKR…KKLK) and 568–577 (HKSKLKSKPQ). Positions 573–616 (KSKPQRKVEKEESEKEESEEEESEEEEEEDDEDYESEEDKKKKK) form a coiled coil. The span at 586–609 (EKEESEEEESEEEEEEDDEDYESE) shows a compositional bias: acidic residues. Low complexity-rich tracts occupy residues 625 to 636 (TSTHTTTTTTTT) and 666 to 733 (KKSN…PTKK). The segment covering 786–795 (LNKDSKENKK) has biased composition (basic and acidic residues).

This chain is Myb-like protein V (mybV), found in Dictyostelium discoideum (Social amoeba).